The sequence spans 222 residues: Deoxyribose-phosphate aldolase (222 aa).

The active-site Proton donor/acceptor is the aspartate 89. The active-site Schiff-base intermediate with acetaldehyde is the lysine 151. Residue lysine 180 is the Proton donor/acceptor of the active site.

It belongs to the DeoC/FbaB aldolase family. DeoC type 1 subfamily.

The protein localises to the cytoplasm. It carries out the reaction 2-deoxy-D-ribose 5-phosphate = D-glyceraldehyde 3-phosphate + acetaldehyde. It functions in the pathway carbohydrate degradation; 2-deoxy-D-ribose 1-phosphate degradation; D-glyceraldehyde 3-phosphate and acetaldehyde from 2-deoxy-alpha-D-ribose 1-phosphate: step 2/2. Catalyzes a reversible aldol reaction between acetaldehyde and D-glyceraldehyde 3-phosphate to generate 2-deoxy-D-ribose 5-phosphate. In Acholeplasma laidlawii (strain PG-8A), this protein is Deoxyribose-phosphate aldolase.